The chain runs to 120 residues: Large ribosomal subunit protein uL18 (120 aa).

It belongs to the universal ribosomal protein uL18 family. As to quaternary structure, part of the 50S ribosomal subunit; part of the 5S rRNA/L5/L18/L25 subcomplex. Contacts the 5S and 23S rRNAs.

In terms of biological role, this is one of the proteins that bind and probably mediate the attachment of the 5S RNA into the large ribosomal subunit, where it forms part of the central protuberance. This Synechococcus elongatus (strain ATCC 33912 / PCC 7942 / FACHB-805) (Anacystis nidulans R2) protein is Large ribosomal subunit protein uL18.